A 615-amino-acid polypeptide reads, in one-letter code: DNA mismatch repair protein MutL (615 aa).

A disordered region spans residues His-362–Tyr-397. Over residues Pro-378–Pro-391 the composition is skewed to low complexity.

This sequence belongs to the DNA mismatch repair MutL/HexB family.

This protein is involved in the repair of mismatches in DNA. It is required for dam-dependent methyl-directed DNA mismatch repair. May act as a 'molecular matchmaker', a protein that promotes the formation of a stable complex between two or more DNA-binding proteins in an ATP-dependent manner without itself being part of a final effector complex. The polypeptide is DNA mismatch repair protein MutL (Escherichia fergusonii (strain ATCC 35469 / DSM 13698 / CCUG 18766 / IAM 14443 / JCM 21226 / LMG 7866 / NBRC 102419 / NCTC 12128 / CDC 0568-73)).